The chain runs to 664 residues: Intraflagellar transport protein 70A (664 aa).

7 TPR repeats span residues 11–44, 45–78, 153–186, 188–220, 392–423, 424–456, and 458–491; these read DGEF…SPRS, RAGL…HPEL, LDGQ…SGYR, DLSY…GIRQ, LTKQ…EKYI, PVLM…CNDH, and VWKL…HYDN. The stretch at 507 to 534 forms a coiled coil; it reads YIMTSQNEEAEELMRKIEKEEEQLSYDD. One copy of the TPR 8 repeat lies at 543 to 576; the sequence is CIVNLVIGTLYCAKGNYDFGISRVIKSLEPYNKK.

The protein belongs to the TTC30/dfy-1/fleer family.

It localises to the cell projection. The protein resides in the cilium. Functionally, required for polyglutamylation of axonemal tubulin. Plays a role in anterograde intraflagellar transport (IFT), the process by which cilia precursors are transported from the base of the cilium to the site of their incorporation at the tip. The protein is Intraflagellar transport protein 70A (IFT70A) of Bos taurus (Bovine).